A 422-amino-acid chain; its full sequence is Multifunctional CCA protein (422 aa).

Residues G8 and R11 each coordinate ATP. Positions 8 and 11 each coordinate CTP. Positions 21 and 23 each coordinate Mg(2+). ATP contacts are provided by R91, R137, and R140. CTP-binding residues include R91, R137, and R140. The HD domain maps to 228–329; sequence TGLHSLMALE…VKLLQSCDAW (102 aa). The interval 403 to 422 is disordered; the sequence is FKQDNAPEAQEKGGEDVGLT.

It belongs to the tRNA nucleotidyltransferase/poly(A) polymerase family. Bacterial CCA-adding enzyme type 1 subfamily. Monomer. Can also form homodimers and oligomers. The cofactor is Mg(2+). Requires Ni(2+) as cofactor.

It carries out the reaction a tRNA precursor + 2 CTP + ATP = a tRNA with a 3' CCA end + 3 diphosphate. The enzyme catalyses a tRNA with a 3' CCA end + 2 CTP + ATP = a tRNA with a 3' CCACCA end + 3 diphosphate. In terms of biological role, catalyzes the addition and repair of the essential 3'-terminal CCA sequence in tRNAs without using a nucleic acid template. Adds these three nucleotides in the order of C, C, and A to the tRNA nucleotide-73, using CTP and ATP as substrates and producing inorganic pyrophosphate. tRNA 3'-terminal CCA addition is required both for tRNA processing and repair. Also involved in tRNA surveillance by mediating tandem CCA addition to generate a CCACCA at the 3' terminus of unstable tRNAs. While stable tRNAs receive only 3'-terminal CCA, unstable tRNAs are marked with CCACCA and rapidly degraded. The sequence is that of Multifunctional CCA protein from Hahella chejuensis (strain KCTC 2396).